An 89-amino-acid polypeptide reads, in one-letter code: Heat shock protein 30A (89 aa).

2 stretches are compositionally biased toward basic and acidic residues: residues Met-1 to Arg-11 and Leu-19 to Glu-39. The interval Met-1–Leu-55 is disordered. The region spanning Ser-35–Glu-89 is the sHSP domain.

This sequence belongs to the small heat shock protein (HSP20) family.

This chain is Heat shock protein 30A (hsp30a), found in Xenopus laevis (African clawed frog).